Here is a 32-residue protein sequence, read N- to C-terminus: U3-cyrtautoxin-As1a (32 aa).

3 cysteine pairs are disulfide-bonded: Cys-4/Cys-19, Cys-11/Cys-24, and Cys-18/Cys-29.

The protein belongs to the neurotoxin 14 (magi-1) family. It to aptotoxin III. As to expression, expressed by the venom gland.

It localises to the secreted. Functionally, is both paralytic and lethal, when injected into lepidopteran larvae. Is a slower acting toxin, being lethal at 24 hours, but not paralytic at 1 hour post-injection. The protein is U3-cyrtautoxin-As1a of Apomastus schlingeri (Trap-door spider).